Here is a 235-residue protein sequence, read N- to C-terminus: Small ribosomal subunit protein uS2c (235 aa).

Belongs to the universal ribosomal protein uS2 family.

Its subcellular location is the plastid. It is found in the chloroplast. This Anthoceros angustus (Hornwort) protein is Small ribosomal subunit protein uS2c (rps2).